The following is a 352-amino-acid chain: Histidine biosynthesis bifunctional protein HisB (352 aa).

The segment at 1 to 163 (MKKILFIDRD…MVASAIINDA (163 aa)) is histidinol-phosphatase. The active-site Nucleophile is the Asp-8. Residues Asp-8 and Asp-10 each contribute to the Mg(2+) site. Asp-10 acts as the Proton donor in catalysis. Positions 91, 93, 99, and 101 each coordinate Zn(2+). Asp-128 contacts Mg(2+). The interval 164-352 (RKASVQRKTK…NYLPSTKGVL (189 aa)) is imidazoleglycerol-phosphate dehydratase.

In the N-terminal section; belongs to the histidinol-phosphatase family. It in the C-terminal section; belongs to the imidazoleglycerol-phosphate dehydratase family. Mg(2+) is required as a cofactor. Requires Zn(2+) as cofactor.

Its subcellular location is the cytoplasm. The catalysed reaction is D-erythro-1-(imidazol-4-yl)glycerol 3-phosphate = 3-(imidazol-4-yl)-2-oxopropyl phosphate + H2O. The enzyme catalyses L-histidinol phosphate + H2O = L-histidinol + phosphate. It functions in the pathway amino-acid biosynthesis; L-histidine biosynthesis; L-histidine from 5-phospho-alpha-D-ribose 1-diphosphate: step 6/9. The protein operates within amino-acid biosynthesis; L-histidine biosynthesis; L-histidine from 5-phospho-alpha-D-ribose 1-diphosphate: step 8/9. The sequence is that of Histidine biosynthesis bifunctional protein HisB from Legionella pneumophila subsp. pneumophila (strain Philadelphia 1 / ATCC 33152 / DSM 7513).